The chain runs to 314 residues: Methionyl-tRNA formyltransferase (314 aa).

112–115 (SLLP) is a binding site for (6S)-5,6,7,8-tetrahydrofolate.

The protein belongs to the Fmt family.

It carries out the reaction L-methionyl-tRNA(fMet) + (6R)-10-formyltetrahydrofolate = N-formyl-L-methionyl-tRNA(fMet) + (6S)-5,6,7,8-tetrahydrofolate + H(+). Its function is as follows. Attaches a formyl group to the free amino group of methionyl-tRNA(fMet). The formyl group appears to play a dual role in the initiator identity of N-formylmethionyl-tRNA by promoting its recognition by IF2 and preventing the misappropriation of this tRNA by the elongation apparatus. This is Methionyl-tRNA formyltransferase from Legionella pneumophila (strain Corby).